The chain runs to 319 residues: Malate dehydrogenase (319 aa).

Residues 10–15 (GAGQIG) and aspartate 34 contribute to the NAD(+) site. Residues arginine 85 and arginine 91 each coordinate substrate. NAD(+)-binding positions include asparagine 98 and 121–123 (ITN). Substrate contacts are provided by asparagine 123 and arginine 154. Histidine 178 (proton acceptor) is an active-site residue.

This sequence belongs to the LDH/MDH superfamily. MDH type 3 family.

The catalysed reaction is (S)-malate + NAD(+) = oxaloacetate + NADH + H(+). In terms of biological role, catalyzes the reversible oxidation of malate to oxaloacetate. The protein is Malate dehydrogenase of Rhodospirillum centenum (strain ATCC 51521 / SW).